A 259-amino-acid polypeptide reads, in one-letter code: Type III pantothenate kinase (259 aa).

9 to 16 contacts ATP; it reads DAGNSRIK. Residues Tyr-93 and 100 to 103 each bind substrate; that span reads GSDR. Residue Asp-102 is the Proton acceptor of the active site. Residue Thr-126 participates in ATP binding. Residue Thr-190 coordinates substrate.

Belongs to the type III pantothenate kinase family. As to quaternary structure, homodimer. It depends on NH4(+) as a cofactor. K(+) serves as cofactor.

The protein localises to the cytoplasm. It catalyses the reaction (R)-pantothenate + ATP = (R)-4'-phosphopantothenate + ADP + H(+). It functions in the pathway cofactor biosynthesis; coenzyme A biosynthesis; CoA from (R)-pantothenate: step 1/5. Its function is as follows. Catalyzes the phosphorylation of pantothenate (Pan), the first step in CoA biosynthesis. This is Type III pantothenate kinase from Burkholderia thailandensis (strain ATCC 700388 / DSM 13276 / CCUG 48851 / CIP 106301 / E264).